Consider the following 265-residue polypeptide: MAVGKNKRLTKGGKKGAKKKVVDPFTKKEWYDVKAPSMFAVRQIGKTLVTRSQGTKIASDNLKGRVFEVSLADLQNDEVTFRKFKLIAEEVQGRNVLTNFSGMSLTRDKLCSMVKKWQTLIEANVDVKTTDGYLLRVFAIGFTKKRNNQVKKTCYAQHAQVKAIRKKMVEIVSREVSSNDMKEVVNKLIPDSIGKDIEKSCQGIYPLHDVLIHKVKVLKKPKFDVGKLMELHGEGSTTTSKGVTSEGGEKVDRVDGYEPPVLQNV.

The segment at 234-256 (EGSTTTSKGVTSEGGEKVDRVDG) is disordered. The segment covering 247 to 256 (GGEKVDRVDG) has biased composition (basic and acidic residues).

This sequence belongs to the eukaryotic ribosomal protein eS1 family. As to quaternary structure, component of the small ribosomal subunit. Mature ribosomes consist of a small (40S) and a large (60S) subunit. The 40S subunit contains about 33 different proteins and 1 molecule of RNA (18S). The 60S subunit contains about 49 different proteins and 3 molecules of RNA (28S, 5.8S and 5S).

Its subcellular location is the cytoplasm. The polypeptide is Small ribosomal subunit protein eS1 (Aplysia californica (California sea hare)).